A 730-amino-acid chain; its full sequence is Catalase-peroxidase (730 aa).

Residues 1–11 show a composition bias toward basic and acidic residues; it reads MDAKTDDKDAG. Residues 1 to 21 form the signal peptide; it reads MDAKTDDKDAGKCPFSSGSHA. Residues 1–24 are disordered; the sequence is MDAKTDDKDAGKCPFSSGSHAHRN. The tryptophyl-tyrosyl-methioninium (Trp-Tyr) (with M-244) cross-link spans 96–218; that stretch reads WHSAGTYRIS…LGAVQMGLIY (123 aa). Histidine 97 acts as the Proton acceptor in catalysis. The segment at residues 218-244 is a cross-link (tryptophyl-tyrosyl-methioninium (Tyr-Met) (with W-96)); the sequence is YVNPEGPNGNPDPVGSAKDIRETFYRM. Histidine 259 provides a ligand contact to heme b.

It belongs to the peroxidase family. Peroxidase/catalase subfamily. As to quaternary structure, homodimer or homotetramer. The cofactor is heme b. Post-translationally, formation of the three residue Trp-Tyr-Met cross-link is important for the catalase, but not the peroxidase activity of the enzyme.

It carries out the reaction H2O2 + AH2 = A + 2 H2O. It catalyses the reaction 2 H2O2 = O2 + 2 H2O. Its function is as follows. Bifunctional enzyme with both catalase and broad-spectrum peroxidase activity. The polypeptide is Catalase-peroxidase (Rhodopseudomonas palustris (strain BisA53)).